A 72-amino-acid chain; its full sequence is Translation initiation factor IF-1 2 (72 aa).

Positions methionine 1 to lysine 72 constitute an S1-like domain.

This sequence belongs to the IF-1 family. Component of the 30S ribosomal translation pre-initiation complex which assembles on the 30S ribosome in the order IF-2 and IF-3, IF-1 and N-formylmethionyl-tRNA(fMet); mRNA recruitment can occur at any time during PIC assembly.

The protein resides in the cytoplasm. Its function is as follows. One of the essential components for the initiation of protein synthesis. Stabilizes the binding of IF-2 and IF-3 on the 30S subunit to which N-formylmethionyl-tRNA(fMet) subsequently binds. Helps modulate mRNA selection, yielding the 30S pre-initiation complex (PIC). Upon addition of the 50S ribosomal subunit IF-1, IF-2 and IF-3 are released leaving the mature 70S translation initiation complex. This chain is Translation initiation factor IF-1 2, found in Symbiobacterium thermophilum (strain DSM 24528 / JCM 14929 / IAM 14863 / T).